The primary structure comprises 442 residues: Probable carboxypeptidase PABG_01461 (442 aa).

Residues 1–20 form the signal peptide; sequence MKLQYLVALLSVQAVPPVTA. N-linked (GlcNAc...) asparagine glycosylation is present at Asn-102. Asp-160 is a binding site for Zn(2+). The active-site Proton acceptor is Glu-192. A Zn(2+)-binding site is contributed by Glu-193. The N-linked (GlcNAc...) asparagine glycan is linked to Asn-343.

It belongs to the peptidase M20A family. Requires Zn(2+) as cofactor.

The protein resides in the secreted. The protein is Probable carboxypeptidase PABG_01461 of Paracoccidioides brasiliensis (strain Pb03).